The chain runs to 325 residues: Necdin (325 aa).

2 disordered regions span residues Met1 to Val69 and Ala77 to Pro96. The MAGE domain maps to Leu102–Ala301.

As to quaternary structure, binds to the transactivation domains of E2F1 and p53. Binds also SV40 large T antigen and adenovirus E1A. Interacts with nucleobindin 1 and 2. As to expression, brain specific. Not detected in other tissues. Expressed in postmitotic neurons. In adult brain the highest expression is in hypothalamus. Highly expressed in thalamus and midbrain. Relatively low levels are in cerebral cortex, hippocampus, striatum, olfactory bulb, cerebellum, pons and spinal cord. Also detected in neurally differentiated embryonal carcinoma cells.

It is found in the cytoplasm. Its subcellular location is the nucleus. The protein resides in the nucleoplasm. It localises to the nucleus matrix. Its function is as follows. Growth suppressor that facilitates the entry of the cell into cell cycle arrest. Functionally similar to the retinoblastoma protein it binds to and represses the activity of cell-cycle-promoting proteins such as SV40 large T antigen, adenovirus E1A, and the transcription factor E2F. Necdin also interacts with p53 and works in an additive manner to inhibit cell growth. Also functions as a transcription factor and directly binds to specific guanosine-rich DNA sequences. The chain is Necdin (Ndn) from Mus musculus (Mouse).